Reading from the N-terminus, the 476-residue chain is Aspartyl/glutamyl-tRNA(Asn/Gln) amidotransferase subunit B (476 aa).

This sequence belongs to the GatB/GatE family. GatB subfamily. As to quaternary structure, heterotrimer of A, B and C subunits.

The enzyme catalyses L-glutamyl-tRNA(Gln) + L-glutamine + ATP + H2O = L-glutaminyl-tRNA(Gln) + L-glutamate + ADP + phosphate + H(+). The catalysed reaction is L-aspartyl-tRNA(Asn) + L-glutamine + ATP + H2O = L-asparaginyl-tRNA(Asn) + L-glutamate + ADP + phosphate + 2 H(+). Its function is as follows. Allows the formation of correctly charged Asn-tRNA(Asn) or Gln-tRNA(Gln) through the transamidation of misacylated Asp-tRNA(Asn) or Glu-tRNA(Gln) in organisms which lack either or both of asparaginyl-tRNA or glutaminyl-tRNA synthetases. The reaction takes place in the presence of glutamine and ATP through an activated phospho-Asp-tRNA(Asn) or phospho-Glu-tRNA(Gln). The polypeptide is Aspartyl/glutamyl-tRNA(Asn/Gln) amidotransferase subunit B (Lactobacillus delbrueckii subsp. bulgaricus (strain ATCC 11842 / DSM 20081 / BCRC 10696 / JCM 1002 / NBRC 13953 / NCIMB 11778 / NCTC 12712 / WDCM 00102 / Lb 14)).